A 214-amino-acid polypeptide reads, in one-letter code: MLCSRGFQSSLSPLMDFYWPVRSLWPEVRPLLSQRDLLQRNLLEVKSSLELMAKLQQQIFEELDNVPSSLTIQPVSYKHDKDGEGFALTLDTKDFSPEELSVKQVGRKLRVSGKTEKKLDDGEGSYSYRCQEFRQEFDLPEKVNPETVTCSLAHDGKLHIQAPKNTLSGEEEVAERVVPINCSLDVKTPQFLSKTEGSITDTQKKQENTISKED.

The sHSP domain maps to 66 to 183; the sequence is VPSSLTIQPV…AERVVPINCS (118 aa). Residues 193–214 form a disordered region; sequence SKTEGSITDTQKKQENTISKED. Over residues 202–214 the composition is skewed to basic and acidic residues; sequence TQKKQENTISKED.

This sequence belongs to the small heat shock protein (HSP20) family.

The polypeptide is Heat shock protein 30 (hsp30) (Oncorhynchus tshawytscha (Chinook salmon)).